We begin with the raw amino-acid sequence, 350 residues long: MSQIDQLLLSIASNKLAYYALLFSLLFGVFKLTTFTLRFASLIVDLFILPAVDFSKYGANRGNWAVVTGASDGIGKEYALQLAKRGLSIVLVSRTQSKLELLATEISSKYKVNTKIVAFDASKDDEENYLELEKAIYDLPITVLINNVGQSHSIPVPFLETEQKELRDIITINNTATLRITQVVAPAIVATVEKSQKKVRGLILTMGSFGGLLPTPYLATYSGSKAFLQAWSAALAGELNPKGVDVELVISYLVTSAMSKIRRSSLTIPNPKQFVASTLASVGRRNGAQERFATNTPYWAHAIMHFAIENTVGVYSKIANTLNFNMHKSIRTRALKKQEKRSRLAAEKIE.

A helical transmembrane segment spans residues 20 to 40; it reads ALLFSLLFGVFKLTTFTLRFA. NADP(+)-binding residues include valine 66, aspartate 120, asparagine 147, tyrosine 221, lysine 225, valine 254, and serine 256. The Proton donor role is filled by tyrosine 221. Lysine 225 (lowers pKa of active site Tyr) is an active-site residue.

This sequence belongs to the short-chain dehydrogenases/reductases (SDR) family.

Its subcellular location is the endoplasmic reticulum membrane. It carries out the reaction a very-long-chain (3R)-3-hydroxyacyl-CoA + NADP(+) = a very-long-chain 3-oxoacyl-CoA + NADPH + H(+). It functions in the pathway lipid metabolism; fatty acid biosynthesis. Its function is as follows. Component of the microsomal membrane bound fatty acid elongation system, which produces the 26-carbon very long-chain fatty acids (VLCFA) from palmitate. Catalyzes the reduction of the 3-ketoacyl-CoA intermediate that is formed in each cycle of fatty acid elongation. VLCFAs serve as precursors for ceramide and sphingolipids. In Lodderomyces elongisporus (strain ATCC 11503 / CBS 2605 / JCM 1781 / NBRC 1676 / NRRL YB-4239) (Yeast), this protein is Very-long-chain 3-oxoacyl-CoA reductase.